The following is a 275-amino-acid chain: 3-methyl-2-oxobutanoate hydroxymethyltransferase (275 aa).

D51 and D90 together coordinate Mg(2+). Residues D51 to S52, D90, and K120 each bind 3-methyl-2-oxobutanoate. E122 is a Mg(2+) binding site. The active-site Proton acceptor is the E189.

It belongs to the PanB family. In terms of assembly, homodecamer; pentamer of dimers. Requires Mg(2+) as cofactor.

It localises to the cytoplasm. It catalyses the reaction 3-methyl-2-oxobutanoate + (6R)-5,10-methylene-5,6,7,8-tetrahydrofolate + H2O = 2-dehydropantoate + (6S)-5,6,7,8-tetrahydrofolate. It functions in the pathway cofactor biosynthesis; (R)-pantothenate biosynthesis; (R)-pantoate from 3-methyl-2-oxobutanoate: step 1/2. Catalyzes the reversible reaction in which hydroxymethyl group from 5,10-methylenetetrahydrofolate is transferred onto alpha-ketoisovalerate to form ketopantoate. In Phenylobacterium zucineum (strain HLK1), this protein is 3-methyl-2-oxobutanoate hydroxymethyltransferase.